The chain runs to 85 residues: uncharacterized protein (85 aa).

The signal sequence occupies residues 1-21 (MRPLLCALAGLALLCAVGALA). The segment covering 22–35 (DGREDRGSPGDTGE) has biased composition (basic and acidic residues). Residues 22–85 (DGREDRGSPG…EVVHLPGSTL (64 aa)) are disordered. Residues 36-51 (RPAGPARGPGLEPARG) are compositionally biased toward low complexity.

The protein localises to the secreted. This is an uncharacterized protein from Homo sapiens (Human).